A 342-amino-acid polypeptide reads, in one-letter code: Serine/threonine-protein kinase ISR1 (342 aa).

The region spanning 59 to 342 is the Protein kinase domain; the sequence is WRLTRVLGCG…SNARVAEHAF (284 aa). ATP-binding positions include 65–73 and Lys-84; that span reads LGCGSVACV. Asp-190 serves as the catalytic Proton acceptor.

Belongs to the protein kinase superfamily. Ser/Thr protein kinase family.

It catalyses the reaction L-seryl-[protein] + ATP = O-phospho-L-seryl-[protein] + ADP + H(+). It carries out the reaction L-threonyl-[protein] + ATP = O-phospho-L-threonyl-[protein] + ADP + H(+). Functionally, probable serine/threonine protein kinase which may function redundantly with MPK1-independent branch of the PCK1 pathway. This chain is Serine/threonine-protein kinase ISR1 (ISR1), found in Eremothecium gossypii (strain ATCC 10895 / CBS 109.51 / FGSC 9923 / NRRL Y-1056) (Yeast).